A 154-amino-acid polypeptide reads, in one-letter code: MILTVKPLQGKECNVQVTEDEKVSTVKELVSERLNIPPNQQRLLYKGKALADEHRLSDYSIGPEAKLNLVVRPAGERSGVTGMASSNSAVGGVWQTLSTVLAKHFSPADAAKVQEQLIKDYERSLRQLSLDDIERLAVRLLHPDSEGMDTSYLD.

Residues 1–76 enclose the Ubiquitin-like domain; the sequence is MILTVKPLQG…LNLVVRPAGE (76 aa).

Component of the bag6/bat3 complex.

The protein localises to the cytoplasm. It is found in the cytosol. Its subcellular location is the nucleus. In terms of biological role, as part of a cytosolic protein quality control complex, the bag6/bat3 complex, maintains misfolded and hydrophobic patches-containing proteins in a soluble state and participates in their proper delivery to the endoplasmic reticulum or alternatively can promote their sorting to the proteasome where they undergo degradation. The bag6/bat3 complex is involved in the post-translational delivery of tail-anchored/type II transmembrane proteins to the endoplasmic reticulum membrane. Similarly, the bag6/bat3 complex also functions as a sorting platform for proteins of the secretory pathway that are mislocalized to the cytosol either delivering them to the proteasome for degradation or to the endoplasmic reticulum. The bag6/bat3 complex also plays a role in the endoplasmic reticulum-associated degradation (ERAD), a quality control mechanism that eliminates unwanted proteins of the endoplasmic reticulum through their retrotranslocation to the cytosol and their targeting to the proteasome. It maintains these retrotranslocated proteins in an unfolded yet soluble state condition in the cytosol to ensure their proper delivery to the proteasome. The chain is Ubiquitin-like protein 4A (ubl4a) from Esox lucius (Northern pike).